A 490-amino-acid polypeptide reads, in one-letter code: Cobyric acid synthase (490 aa).

Residues 250–432 (QLEIVVIRLP…LHGLLDNHAW (183 aa)) enclose the GATase cobBQ-type domain. C328 functions as the Nucleophile in the catalytic mechanism. Residue H424 is part of the active site.

Belongs to the CobB/CobQ family. CobQ subfamily.

Its pathway is cofactor biosynthesis; adenosylcobalamin biosynthesis. Functionally, catalyzes amidations at positions B, D, E, and G on adenosylcobyrinic A,C-diamide. NH(2) groups are provided by glutamine, and one molecule of ATP is hydrogenolyzed for each amidation. The sequence is that of Cobyric acid synthase from Gloeobacter violaceus (strain ATCC 29082 / PCC 7421).